Consider the following 89-residue polypeptide: MAGIANGVGLLISFMLICGGMPKGHALGTSPYCEKVLSRFAPPGNCLKKNGNALCKESCANEQFREGVCLHLPKPQSKLNCYCSVLKCP.

The first 26 residues, 1-26 (MAGIANGVGLLISFMLICGGMPKGHA), serve as a signal peptide directing secretion. 4 cysteine pairs are disulfide-bonded: Cys33–Cys88, Cys46–Cys69, Cys55–Cys81, and Cys59–Cys83.

The protein belongs to the DEFL family.

The protein resides in the secreted. This Arabidopsis thaliana (Mouse-ear cress) protein is Putative defensin-like protein 40.